Consider the following 262-residue polypeptide: Caffeyl-CoA reductase-Etf complex subunit CarD (262 aa).

The protein belongs to the ETF beta-subunit/FixA family. As to quaternary structure, part of the homotrimeric caffeyl-CoA reductase-Etf complex composed of (R)-2-hydroxyisocaproyl-CoA dehydratase CarC, and the electron transfer flavoprotein (ETF) alpha (CarE) and beta (CarD) subunits. FAD serves as cofactor. AMP is required as a cofactor.

It localises to the cytoplasm. It carries out the reaction hydrocaffeoyl-CoA + 2 reduced [2Fe-2S]-[ferredoxin] + 2 NAD(+) = (E)-caffeoyl-CoA + 2 oxidized [2Fe-2S]-[ferredoxin] + 2 NADH. Caffeyl-CoA reductase-Etf complex catalyzes the reduction of caffeyl-CoA to yield hydrocaffeyl-CoA. It couples the endergonic ferredoxin reduction with NADH as reductant to the exergonic reduction of caffeoyl-CoA with the same reductant. It uses the mechanism of electron bifurcation to overcome the steep energy barrier in ferredoxin reduction. The electron transfer flavoprotein (Etf) mediates the electron transfer between the different donors and acceptors. The complex can also reduce 4-coumaroyl-CoA and feruloyl-CoA. In Acetobacterium woodii (strain ATCC 29683 / DSM 1030 / JCM 2381 / KCTC 1655 / WB1), this protein is Caffeyl-CoA reductase-Etf complex subunit CarD.